The chain runs to 567 residues: Arginine--tRNA ligase (567 aa).

The 'HIGH' region motif lies at 128 to 138; the sequence is ANPTGPLHVGH.

This sequence belongs to the class-I aminoacyl-tRNA synthetase family. As to quaternary structure, monomer.

Its subcellular location is the cytoplasm. It carries out the reaction tRNA(Arg) + L-arginine + ATP = L-arginyl-tRNA(Arg) + AMP + diphosphate. In Acidovorax ebreus (strain TPSY) (Diaphorobacter sp. (strain TPSY)), this protein is Arginine--tRNA ligase.